The following is a 155-amino-acid chain: MTSHDQSYRAGEAKGRTEEKTNQMIGNIEDKAQAAKEKAQQAAQTAKDKTSQTAQAAKEKTQQTAQAAKDKTQQTTQATKEKAQDTTGRAKEKGSEMGQSTKETAQSGKDNSAGFLQQTGEKAKGMAQGATDAVKQTFGMTNDDQDKDHFPTNRH.

Residues 1–155 (MTSHDQSYRA…DKDHFPTNRH (155 aa)) are disordered. 2 stretches are compositionally biased toward basic and acidic residues: residues 11-21 (GEAKGRTEEKT) and 28-39 (IEDKAQAAKEKA). Residues 40-78 (QQAAQTAKDKTSQTAQAAKEKTQQTAQAAKDKTQQTTQA) are compositionally biased toward low complexity. Tandem repeats lie at residues 53 to 63 (TAQAAKEKTQQ) and 64 to 74 (TAQAAKDKTQQ). The 2 X 11 AA approximate tandem repeats of T-A-Q-A-A-K-E-K-T-Q-Q stretch occupies residues 53–74 (TAQAAKEKTQQTAQAAKDKTQQ). Residues 79–95 (TKEKAQDTTGRAKEKGS) show a composition bias toward basic and acidic residues. The span at 97 to 120 (MGQSTKETAQSGKDNSAGFLQQTG) shows a compositional bias: polar residues. The span at 144–155 (DQDKDHFPTNRH) shows a compositional bias: basic and acidic residues.

The protein belongs to the LEA type 4 family. In terms of tissue distribution, highest expression is found in seeds. No expression detected in adult tissues.

This Cicer arietinum (Chickpea) protein is Late embryogenesis abundant protein 2.